Here is a 465-residue protein sequence, read N- to C-terminus: Sushi repeat-containing protein SRPX2 (465 aa).

The first 23 residues, methionine 1–proline 23, serve as a signal peptide directing secretion. Sushi domains follow at residues alanine 69–glutamine 119, methionine 120–aspartate 178, and arginine 262–proline 321. Intrachain disulfides connect cysteine 71–cysteine 105, cysteine 91–cysteine 117, cysteine 122–cysteine 163, and cysteine 149–cysteine 176. The region spanning valine 177–valine 261 is the HYR domain. Cystine bridges form between cysteine 264–cysteine 306 and cysteine 292–cysteine 319.

In terms of assembly, forms homooligomers. Interacts with PLAUR (via the UPAR/Ly6 domains), ADAMTS4 and CTSB. Interacts with HGF; the interaction increases the mitogenic activity of HGF. Contains chondroitin sulfate chains.

The protein resides in the secreted. It is found in the cytoplasm. Its subcellular location is the cell surface. It localises to the synapse. Acts as a ligand for the urokinase plasminogen activator surface receptor. Plays a role in angiogenesis by inducing endothelial cell migration and the formation of vascular network (cords). Involved in cellular migration and adhesion. Increases the phosphorylation levels of FAK. Interacts with and increases the mitogenic activity of HGF. Promotes synapse formation. This is Sushi repeat-containing protein SRPX2 (SRPX2) from Bos taurus (Bovine).